A 95-amino-acid chain; its full sequence is Aspartyl/glutamyl-tRNA(Asn/Gln) amidotransferase subunit C (95 aa).

This sequence belongs to the GatC family. As to quaternary structure, heterotrimer of A, B and C subunits.

The enzyme catalyses L-glutamyl-tRNA(Gln) + L-glutamine + ATP + H2O = L-glutaminyl-tRNA(Gln) + L-glutamate + ADP + phosphate + H(+). It carries out the reaction L-aspartyl-tRNA(Asn) + L-glutamine + ATP + H2O = L-asparaginyl-tRNA(Asn) + L-glutamate + ADP + phosphate + 2 H(+). Allows the formation of correctly charged Asn-tRNA(Asn) or Gln-tRNA(Gln) through the transamidation of misacylated Asp-tRNA(Asn) or Glu-tRNA(Gln) in organisms which lack either or both of asparaginyl-tRNA or glutaminyl-tRNA synthetases. The reaction takes place in the presence of glutamine and ATP through an activated phospho-Asp-tRNA(Asn) or phospho-Glu-tRNA(Gln). The sequence is that of Aspartyl/glutamyl-tRNA(Asn/Gln) amidotransferase subunit C from Chlorobium limicola (strain DSM 245 / NBRC 103803 / 6330).